Here is a 121-residue protein sequence, read N- to C-terminus: Small ribosomal subunit protein uS13 (121 aa).

A disordered region spans residues 93–121; that stretch reads RGLPVRGQNSKNNARTRKGPRRTVANKKK. The segment covering 106–121 has biased composition (basic residues); that stretch reads ARTRKGPRRTVANKKK.

The protein belongs to the universal ribosomal protein uS13 family. In terms of assembly, part of the 30S ribosomal subunit. Forms a loose heterodimer with protein S19. Forms two bridges to the 50S subunit in the 70S ribosome.

Its function is as follows. Located at the top of the head of the 30S subunit, it contacts several helices of the 16S rRNA. In the 70S ribosome it contacts the 23S rRNA (bridge B1a) and protein L5 of the 50S subunit (bridge B1b), connecting the 2 subunits; these bridges are implicated in subunit movement. Contacts the tRNAs in the A and P-sites. The polypeptide is Small ribosomal subunit protein uS13 (Bacillus subtilis (strain 168)).